Here is a 1192-residue protein sequence, read N- to C-terminus: MEAFEISDFKEHAKKKSMWAGALNKVTISGLMGVFTEDEDLMALPIHRDHCPALLKIFDEIIVNATDHERACHSKTKKVTYIKISFDKGVFSCENDGPGIPIAKHEQASLIAKRDVYVPEVASCHFLAGTNINKAKDCIKGGTNGVGLKLAMVHSQWAILTTADGAQKYVQHINQRLDIIEPPTITPSREMFTRIELMPVYQELGYAEPLSETEQADLSAWIYLRACQCAAYVGKGTTIYYNDKPCRTGSVMALAKMYTLLSAPNSTIHTATIKADAKPYSLHPLQVAAVVSPKFKKFEHVSVINGVNCVKGEHVTFLKKTINEMVVKKFQQTIKDKNRKTTLRDSCSNIFIVIVGSIPGIEWTGQRKDELSIAENVFKTHYSIPSSFLTSMTKSIVDILLQSISKKDNHKQVDVDKYTRARNAGGKRAQDCMLLAAEGDSALSLLRTGLTLGKSNPSGPSFDFCGMISLGGVIMNACKKVTNITTDSGETIMVRNEQLTNNKVLQGIVQVLGLDFNCHYKTQEERAKLRYGCIVACVDQDLDGCGKILGLLLAYFHLFWPQLIIHGFVKRLLTPLIRVYEKGKTVPVEFYYEQEFDAWAKKQTSLANHTVKYYKGLAAHDTHEVKSMFKHFDNMVYTFTLDDSAKELFHIYFGGESELRKRELCTGVVPLTETQTQSIHSVRRIPCSLHLQVDTKAYKLDAIERQIPNFLDGMTRARRKILAGGVKCFASNNRERKVFQFGGYVADHMFYHHGDMSLNTSIIKAAQYYPGSSHLYPVFIGIGSFGSRHLGGKDAGSPRYISVQLASEFIKTMFPAEDSWLLPYVFEDGQRAEPEYYVPVLPLAIMEYGANPSEGWKYTTWARQLEDILALVRAYVDKNNPKHELLHYAIKHKITILPLRPSNYNFKGHLKRFGQYYYSYGTYVISEQRNIITITELPLRVPTVAYIESIKKSSNRMTFIEEIIDYSSSETIEILVKLKPNSLNRIMEEFKCTEEQDSIENFLRLRNCLHSHLNFVKPKGGIIEFNTYYEILYAWLPYRRELYQKRLMREHAVLKLRIIMETAIVRYINESAELNLSHYEDEKEASRILSEHGFPPLNQTLIISPEFASIEELNQKALQGCYTYILSLQARELLIAAKTRRVEKIKKMQARLDKVEQLLQESPFPGASVWLEEIDAVEKAIIKGRNTQWKFH.

Residues Asn-64, Asn-95, and 142–149 (GTNGVGLK) each bind ATP. Residues Glu-438, Asp-539, and Asp-541 each coordinate Mg(2+). One can recognise a Topo IIA-type catalytic domain in the interval 707 to 1174 (IPNFLDGMTR…PGASVWLEEI (468 aa)). Catalysis depends on Tyr-800, which acts as the O-(5'-phospho-DNA)-tyrosine intermediate.

This sequence belongs to the type II topoisomerase family. The cofactor is Mg(2+). It depends on Mn(2+) as a cofactor. Ca(2+) serves as cofactor.

It localises to the host cytoplasm. It carries out the reaction ATP-dependent breakage, passage and rejoining of double-stranded DNA.. Functionally, type II topoisomerase. Processively relaxes supercoiled DNA. Displays DNA-supercoiling activity only when associated with the viral histone-like protein. This African swine fever virus (isolate Tick/South Africa/Pretoriuskop Pr4/1996) (ASFV) protein is DNA topoisomerase 2.